A 322-amino-acid chain; its full sequence is Beta-ketoacyl-[acyl-carrier-protein] synthase III (322 aa).

Active-site residues include Cys113 and His249. The tract at residues 250–254 (QANLR) is ACP-binding. Asn279 is a catalytic residue.

This sequence belongs to the thiolase-like superfamily. FabH family. As to quaternary structure, homodimer.

It is found in the cytoplasm. It carries out the reaction malonyl-[ACP] + acetyl-CoA + H(+) = 3-oxobutanoyl-[ACP] + CO2 + CoA. It participates in lipid metabolism; fatty acid biosynthesis. Its function is as follows. Catalyzes the condensation reaction of fatty acid synthesis by the addition to an acyl acceptor of two carbons from malonyl-ACP. Catalyzes the first condensation reaction which initiates fatty acid synthesis and may therefore play a role in governing the total rate of fatty acid production. Possesses both acetoacetyl-ACP synthase and acetyl transacylase activities. Its substrate specificity determines the biosynthesis of branched-chain and/or straight-chain of fatty acids. The polypeptide is Beta-ketoacyl-[acyl-carrier-protein] synthase III (Granulibacter bethesdensis (strain ATCC BAA-1260 / CGDNIH1)).